Reading from the N-terminus, the 178-residue chain is Large ribosomal subunit protein uL13m (178 aa).

The protein belongs to the universal ribosomal protein uL13 family. In terms of assembly, component of the mitochondrial ribosome large subunit (39S) which comprises a 16S rRNA and about 50 distinct proteins.

The protein resides in the mitochondrion. In Drosophila melanogaster (Fruit fly), this protein is Large ribosomal subunit protein uL13m (mRpL13).